Consider the following 276-residue polypeptide: MALKHFNPTTPSTRGTVLIDRSELFKGKPVKQLTEGKNKSGGRNNHGRTTVRFRGGGHKQSYRYVDFKRRKFDVAATVERLEYDPNRTAFIALIKYEDGELAYILAPQRVKVGDRVISGAHTDVKPGNAMPLGAMPVGTIVHNIELKQGAGGKLARSAGTYAQLVGKDAGYAQVKLQSGELRLVRGECMATVGAVSNPDNMNQHMGKAGRSRWLGRRPHNRGVVMNPVDHPHGGGEGRTSGGRHPVTPWGVPTKGYKTRVNKKTDSLIIRRRKSGK.

Residues 224–254 are disordered; sequence VMNPVDHPHGGGEGRTSGGRHPVTPWGVPTK.

The protein belongs to the universal ribosomal protein uL2 family. As to quaternary structure, part of the 50S ribosomal subunit. Forms a bridge to the 30S subunit in the 70S ribosome.

Its function is as follows. One of the primary rRNA binding proteins. Required for association of the 30S and 50S subunits to form the 70S ribosome, for tRNA binding and peptide bond formation. It has been suggested to have peptidyltransferase activity; this is somewhat controversial. Makes several contacts with the 16S rRNA in the 70S ribosome. The polypeptide is Large ribosomal subunit protein uL2 (Gluconobacter oxydans (strain 621H) (Gluconobacter suboxydans)).